The sequence spans 866 residues: Speckle targeted PIP5K1A-regulated poly(A) polymerase (866 aa).

A Matrin-type zinc finger spans residues 16–46; that stretch reads FRCCLCDVTTANRPSLDAHLKGRKHRDLVQL. An RRM domain is found at 56 to 128; sequence RSVFVSGFPR…HTLRVRPREQ (73 aa). The interval 116–147 is disordered; that stretch reads LGGHTLRVRPREQKEFQSPASKSPKGVDSNSH. Ser-205 contributes to the ATP binding site. Mg(2+)-binding residues include Asp-216 and Asp-218. UTP is bound by residues Asp-216 and Asp-218. 2 disordered regions span residues 223–249 and 267–321; these read LGDM…STLA and LSPT…EGKH. Residues 282 to 304 show a composition bias toward polar residues; the sequence is TPSSLAPQTPDSALGSDTVTSPQ. Asn-393 contacts ATP. Positions 393, 415, 433, and 550 each coordinate UTP. The 59-residue stretch at 492–550 folds into the PAP-associated domain; the sequence is LSSLLAQFFSCVSCWDLSGSLLSLREGQALMVAGGLPSDLWEGLRLGPMNLQDPFDLSH. Residues 599 to 866 form a KA1; binds the bulging loops of U6 snRNA but is dispensable for terminal uridylyltransferase activity region; it reads SSPSSLLSAK…IPQALKNLLK (268 aa). Disordered stretches follow at residues 638–687, 728–755, and 773–792; these read QGTK…DHSE, EQNP…PSSV, and RRRF…STGA. Over residues 669–687 the composition is skewed to basic and acidic residues; that stretch reads KSCEEGKEEPQGCAGDHSE. 2 positions are modified to phosphoserine: Ser-686 and Ser-741.

The protein belongs to the DNA polymerase type-B-like family. As to quaternary structure, associates with the cleavage and polyadenylation specificity factor (CPSF) complex. Interacts with CPSF1 and CPSF3; the interaction is direct. Interacts with PIP5K1A. The cofactor is Mg(2+). Requires Mn(2+) as cofactor. In terms of processing, phosphorylated by CK1 in the proline-rich (Pro-rich) region.

The protein localises to the nucleus. It is found in the nucleolus. Its subcellular location is the nucleus speckle. It carries out the reaction RNA(n) + UTP = RNA(n)-3'-uridine ribonucleotide + diphosphate. The catalysed reaction is RNA(n) + ATP = RNA(n)-3'-adenine ribonucleotide + diphosphate. Its activity is regulated as follows. Adenylyltransferase activity is specifically phosphatidylinositol 4,5-bisphosphate (PtdIns(4,5)P2). In terms of biological role, poly(A) polymerase that creates the 3'-poly(A) tail of specific pre-mRNAs. Localizes to nuclear speckles together with PIP5K1A and mediates polyadenylation of a select set of mRNAs, such as HMOX1. In addition to polyadenylation, it is also required for the 3'-end cleavage of pre-mRNAs: binds to the 3'UTR of targeted pre-mRNAs and promotes the recruitment and assembly of the CPSF complex on the 3'UTR of pre-mRNAs. In addition to adenylyltransferase activity, also has uridylyltransferase activity. However, the ATP ratio is higher than UTP in cells, suggesting that it functions primarily as a poly(A) polymerase. Acts as a specific terminal uridylyltransferase for U6 snRNA in vitro: responsible for a controlled elongation reaction that results in the restoration of the four 3'-terminal UMP-residues found in newly transcribed U6 snRNA. Not involved in replication-dependent histone mRNA degradation. The protein is Speckle targeted PIP5K1A-regulated poly(A) polymerase (Tut1) of Rattus norvegicus (Rat).